The following is a 292-amino-acid chain: Mycothiol acetyltransferase (292 aa).

2 consecutive N-acetyltransferase domains span residues 13–168 (ALDR…KWLQ) and 159–292 (KSVA…VYEK). Glu40 is a 1D-myo-inositol 2-(L-cysteinylamino)-2-deoxy-alpha-D-glucopyranoside binding site. 77 to 79 (LAV) is an acetyl-CoA binding site. 3 residues coordinate 1D-myo-inositol 2-(L-cysteinylamino)-2-deoxy-alpha-D-glucopyranoside: Glu179, Lys218, and Glu226. Acetyl-CoA contacts are provided by residues 230–232 (VGL) and 237–243 (RGRGLGD). Tyr264 is a binding site for 1D-myo-inositol 2-(L-cysteinylamino)-2-deoxy-alpha-D-glucopyranoside.

Belongs to the acetyltransferase family. MshD subfamily. In terms of assembly, monomer.

The enzyme catalyses 1D-myo-inositol 2-(L-cysteinylamino)-2-deoxy-alpha-D-glucopyranoside + acetyl-CoA = mycothiol + CoA + H(+). Its function is as follows. Catalyzes the transfer of acetyl from acetyl-CoA to desacetylmycothiol (Cys-GlcN-Ins) to form mycothiol. This chain is Mycothiol acetyltransferase, found in Corynebacterium glutamicum (strain ATCC 13032 / DSM 20300 / JCM 1318 / BCRC 11384 / CCUG 27702 / LMG 3730 / NBRC 12168 / NCIMB 10025 / NRRL B-2784 / 534).